A 29-amino-acid chain; its full sequence is Protein 1.5 (29 aa).

This is Protein 1.5 from Escherichia phage T7 (Bacteriophage T7).